The chain runs to 511 residues: 2'-5'-oligoadenylate synthase-like protein 1 (511 aa).

Ubiquitin-like domains are found at residues 350 to 429 (IQVT…ISPE) and 430 to 506 (IQVF…EGAA).

The protein belongs to the 2-5A synthase family. In terms of assembly, specifically interacts with the ligand binding domain of the thyroid receptor (TR). TRIP14 does not require the presence of thyroid hormone for its interaction. Binds MBD1.

Its subcellular location is the nucleus. It is found in the nucleolus. The protein resides in the cytoplasm. Its function is as follows. Does not have 2'-5'-OAS activity, but can bind double-stranded RNA. Displays antiviral activity via an alternative antiviral pathway independent of RNase L. This Mus musculus (Mouse) protein is 2'-5'-oligoadenylate synthase-like protein 1 (Oasl1).